The following is a 643-amino-acid chain: MLENYGNVASLGFPLLKPAVISQLEGGSELGGSSPLAAGTGLQGLQTDIQTDNDLTKEMYEGKENVSFELQRDFSQETDFSEASLLEKQQEVHSAGNIKKEKSNTIDGTVKDETSPVEECFFSQSSNSYQCHTITGEQPSGCTGLGKSISFDTKLVKHEIINSEERPFKCEELVEPFRCDSQLIQHQENNTEEKPYQCSECGKAFSINEKLIWHQRLHSGEKPFKCVECGKSFSYSSHYITHQTIHSGEKPYQCKMCGKAFSVNGSLSRHQRIHTGEKPYQCKECGNGFSCSSAYITHQRVHTGEKPYECNDCGKAFNVNAKLIQHQRIHTGEKPYECNECGKGFRCSSQLRQHQSIHTGEKPYQCKECGKGFNNNTKLIQHQRIHTGEKPYECTECGKAFSVKGKLIQHQRIHTGEKPYECNECGKAFRCNSQFRQHLRIHTGEKPYECNECGKAFSVNGKLMRHQRIHTGEKPFECNECGRCFTSKRNLLDHHRIHTGEKPYQCKECGKAFSINAKLTRHQRIHTGEKPFKCMECEKAFSCSSNYIVHQRIHTGEKPFQCKECGKAFHVNAHLIRHQRSHTGEKPFRCVECGKGFSFSSDYIIHQTVHTWKKPYMCSVCGKAFRFSFQLSQHQSVHSEGKS.

In terms of domain architecture, KRAB spans 1–43; it reads MLENYGNVASLGFPLLKPAVISQLEGGSELGGSSPLAAGTGLQ. Lysine 157 participates in a covalent cross-link: Glycyl lysine isopeptide (Lys-Gly) (interchain with G-Cter in SUMO2). The C2H2-type 1; degenerate zinc-finger motif lies at 168-190; sequence FKCEELVEPFRCDSQLIQHQENN. 16 consecutive C2H2-type zinc fingers follow at residues 196–218, 224–246, 252–274, 280–302, 308–330, 336–358, 364–386, 392–414, 420–442, 448–470, 476–498, 504–526, 532–554, 560–582, 588–610, and 616–638; these read YQCS…QRLH, FKCV…QTIH, YQCK…QRIH, YQCK…QRVH, YECN…QRIH, YECN…QSIH, YECT…QRIH, YECN…LRIH, FECN…HRIH, FKCM…QRIH, FQCK…QRSH, FRCV…QTVH, and YMCS…QSVH.

This sequence belongs to the krueppel C2H2-type zinc-finger protein family.

It is found in the nucleus. Its function is as follows. May be involved in transcriptional regulation. May have a role in embryonic development. The protein is Zinc finger protein 23 (ZNF23) of Homo sapiens (Human).